We begin with the raw amino-acid sequence, 217 residues long: Large ribosomal subunit protein uL3 (217 aa).

Residues 134-154 (DATHGNSLSHRAPGSIGQCQT) form a disordered region. N5-methylglutamine is present on Gln-153.

Belongs to the universal ribosomal protein uL3 family. In terms of assembly, part of the 50S ribosomal subunit. Forms a cluster with proteins L14 and L19. Methylated by PrmB.

One of the primary rRNA binding proteins, it binds directly near the 3'-end of the 23S rRNA, where it nucleates assembly of the 50S subunit. The protein is Large ribosomal subunit protein uL3 of Coxiella burnetii (strain Dugway 5J108-111).